Reading from the N-terminus, the 239-residue chain is Demethylmenaquinone methyltransferase (239 aa).

S-adenosyl-L-methionine-binding positions include threonine 60, aspartate 81, and aspartate 106–alanine 107.

Belongs to the class I-like SAM-binding methyltransferase superfamily. MenG/UbiE family.

It carries out the reaction a 2-demethylmenaquinol + S-adenosyl-L-methionine = a menaquinol + S-adenosyl-L-homocysteine + H(+). The protein operates within quinol/quinone metabolism; menaquinone biosynthesis; menaquinol from 1,4-dihydroxy-2-naphthoate: step 2/2. Its function is as follows. Methyltransferase required for the conversion of demethylmenaquinol (DMKH2) to menaquinol (MKH2). This Staphylococcus haemolyticus (strain JCSC1435) protein is Demethylmenaquinone methyltransferase.